Here is a 543-residue protein sequence, read N- to C-terminus: Keratin, type II cytoskeletal 75 (543 aa).

Polar residues predominate over residues 1-16 (MSRQSTITFQTSSRRG). Positions 1-48 (MSRQSTITFQTSSRRGFSTASATTPATSRSRFSSASVTHSPAGSGGLG) are disordered. The tract at residues 1–144 (MSRQSTITFQ…DPNIQRVRKE (144 aa)) is head. The segment covering 17 to 36 (FSTASATTPATSRSRFSSAS) has biased composition (low complexity). The coil 1A stretch occupies residues 145 to 180 (EREQIKTLNNKFASFIDKVRFLEQQNKVLETKWSLL). Positions 145–458 (EREQIKTLNN…KLLEGEECRL (314 aa)) constitute an IF rod domain. The linker 1 stretch occupies residues 181 to 199 (QEQGTRTVRQSLEPFFEAY). Residues 200 to 292 (ITDLRRQLDS…LFEAELCQMQ (93 aa)) are coil 1B. The linker 12 stretch occupies residues 293 to 315 (TRVSDTSVVLSMDNNRSLDLDSI). The interval 316-454 (IAEVKAQYEE…ATYRKLLEGE (139 aa)) is coil 2. Residues 455 to 543 (ECRLSGEGVS…TSSSRKSYKH (89 aa)) are tail. The segment at 511–543 (SSFSNSSSRGLGGSGSSFKFVSTTSSSRKSYKH) is disordered. Positions 526–543 (SSFKFVSTTSSSRKSYKH) are enriched in low complexity.

The protein belongs to the intermediate filament family. As to quaternary structure, heterodimer of a type I and a type II keratin. May associate with KRT17.

In terms of biological role, plays a central role in hair and nail formation. Essential component of keratin intermediate filaments in the companion layer of the hair follicle. The sequence is that of Keratin, type II cytoskeletal 75 (KRT75) from Bos taurus (Bovine).